The chain runs to 343 residues: Cytoplasmic tRNA 2-thiolation protein 1 (343 aa).

Belongs to the TtcA family. CTU1/NCS6/ATPBD3 subfamily.

The protein resides in the cytoplasm. The protein operates within tRNA modification; 5-methoxycarbonylmethyl-2-thiouridine-tRNA biosynthesis. Functionally, plays a central role in 2-thiolation of mcm(5)S(2)U at tRNA wobble positions of tRNA(Lys), tRNA(Glu) and tRNA(Gln). Directly binds tRNAs and probably acts by catalyzing adenylation of tRNAs, an intermediate required for 2-thiolation. It is unclear whether it acts as a sulfurtransferase that transfers sulfur from thiocarboxylated URM1 onto the uridine of tRNAs at wobble position. This is Cytoplasmic tRNA 2-thiolation protein 1 from Drosophila pseudoobscura pseudoobscura (Fruit fly).